The primary structure comprises 136 residues: Histone H3.1 (136 aa).

Positions 1 to 41 (MARTKQTARKSTGGKAPRKQLATKAARKSAPAAGGVKKPHR) are disordered. Residue K5 is modified to N6,N6,N6-trimethyllysine; alternate. An N6,N6-dimethyllysine; alternate modification is found at K5. K5 and K10 each carry N6-methyllysine; alternate. Position 10 is an N6-acetyllysine; alternate (K10). Phosphoserine is present on S11. Position 15 is an N6,N6-dimethyllysine; alternate (K15). 5 positions are modified to N6-acetyllysine; alternate: K15, K19, K24, K28, and K37. Residues K19, K24, K28, and K37 each carry the N6-methyllysine; alternate modification. Residues 22–33 (ATKAARKSAPAA) show a composition bias toward low complexity. N6,N6,N6-trimethyllysine; alternate occurs at positions 28 and 37. K28 and K37 each carry N6,N6-dimethyllysine; alternate. N6-acetyllysine occurs at positions 57 and 65. K80 is modified (N6,N6,N6-trimethyllysine; alternate). K80 is modified (N6,N6-dimethyllysine; alternate). An N6-methyllysine; alternate modification is found at K80.

This sequence belongs to the histone H3 family. In terms of assembly, the nucleosome is a histone octamer containing two molecules each of H2A, H2B, H3 and H4 assembled in one H3-H4 heterotetramer and two H2A-H2B heterodimers. The octamer wraps approximately 147 bp of DNA. In terms of processing, phosphorylated to form H3S10ph. H3S10ph promotes subsequent H3K14ac formation and is required for transcriptional activation through TBP recruitment to the promoters. Mono-, di- and trimethylated by the COMPASS complex to form H3K4me1/2/3. H3K4me activates gene expression by regulating transcription elongation and plays a role in telomere length maintenance. H3K4me enrichment correlates with transcription levels, and occurs in a 5' to 3' gradient with H3K4me3 enrichment at the 5'-end of genes, shifting to H3K4me2 and then H3K4me1. Methylated by SET2 to form H3K36me. H3K36me represses gene expression. Methylated by DOT1 to form H3K79me. H3K79me is required for association of SIR proteins with telomeric regions and for telomeric silencing. The COMPASS-mediated formation of H3K4me2/3 and the DOT1-mediated formation of H3K79me require H2BK123ub1. Post-translationally, acetylation of histone H3 leads to transcriptional activation. H3K14ac formation by GCN5 is promoted by H3S10ph. H3K14ac can also be formed by ESA1. H3K56ac formation occurs predominantly in newly synthesized H3 molecules during G1, S and G2/M of the cell cycle and may be involved in DNA repair.

The protein localises to the nucleus. Its subcellular location is the chromosome. Its function is as follows. Core component of nucleosome. Nucleosomes wrap and compact DNA into chromatin, limiting DNA accessibility to the cellular machineries which require DNA as a template. Histones thereby play a central role in transcription regulation, DNA repair, DNA replication and chromosomal stability. DNA accessibility is regulated via a complex set of post-translational modifications of histones, also called histone code, and nucleosome remodeling. The polypeptide is Histone H3.1 (HHT1) (Mycosarcoma maydis (Corn smut fungus)).